The chain runs to 147 residues: Transcriptional regulator FurA (147 aa).

The DNA-binding stretch occupies residues 1–85 (MSSIPDYAEQ…GSVARYESRV (85 aa)). Residues His-34 and Glu-82 each contribute to the Zn(2+) site. Positions 86 to 147 (GDNHHHIVCR…SISDTSRSHP (62 aa)) are dimerization. The Fe cation site is built by Asp-87 and His-89. 4 residues coordinate Zn(2+): His-91, Cys-94, Cys-97, and Asp-102. Glu-109 is a Fe cation binding site.

Belongs to the Fur family. As to quaternary structure, homodimer.

It localises to the cytoplasm. Represses transcription of the catalase-peroxidase gene katG and its own transcription by binding to the promoter region in a redox-dependent manner. The protein is Transcriptional regulator FurA (furA) of Mycobacterium bovis (strain ATCC BAA-935 / AF2122/97).